A 270-amino-acid chain; its full sequence is Phosphatidylglycerol--prolipoprotein diacylglyceryl transferase (270 aa).

4 helical membrane-spanning segments follow: residues 19-39 (FPVY…LWLA), 56-76 (LVLI…VIFE), 92-112 (QGGL…ILFA), and 116-136 (GVSF…GQAI). Arg-138 contributes to the a 1,2-diacyl-sn-glycero-3-phospho-(1'-sn-glycerol) binding site. The next 3 helical transmembrane spans lie at 178–198 (HPTF…LLAL), 206–226 (GELF…VEGL), and 236–256 (LRIA…FIIV).

It belongs to the Lgt family.

The protein resides in the cell membrane. The catalysed reaction is L-cysteinyl-[prolipoprotein] + a 1,2-diacyl-sn-glycero-3-phospho-(1'-sn-glycerol) = an S-1,2-diacyl-sn-glyceryl-L-cysteinyl-[prolipoprotein] + sn-glycerol 1-phosphate + H(+). Its pathway is protein modification; lipoprotein biosynthesis (diacylglyceryl transfer). Its function is as follows. Catalyzes the transfer of the diacylglyceryl group from phosphatidylglycerol to the sulfhydryl group of the N-terminal cysteine of a prolipoprotein, the first step in the formation of mature lipoproteins. The chain is Phosphatidylglycerol--prolipoprotein diacylglyceryl transferase from Bacillus thuringiensis subsp. konkukian (strain 97-27).